Reading from the N-terminus, the 282-residue chain is Large ribosomal subunit protein uL2 (282 aa).

Positions 215–282 (RHKGIRPTVR…IIRSRKETKK (68 aa)) are disordered. Over residues 263-282 (RNPKKPSTKLIIRSRKETKK) the composition is skewed to basic residues.

Belongs to the universal ribosomal protein uL2 family. Part of the 50S ribosomal subunit. Forms a bridge to the 30S subunit in the 70S ribosome.

One of the primary rRNA binding proteins. Required for association of the 30S and 50S subunits to form the 70S ribosome, for tRNA binding and peptide bond formation. It has been suggested to have peptidyltransferase activity; this is somewhat controversial. Makes several contacts with the 16S rRNA in the 70S ribosome. This chain is Large ribosomal subunit protein uL2, found in Mesomycoplasma hyopneumoniae (strain J / ATCC 25934 / NCTC 10110) (Mycoplasma hyopneumoniae).